A 210-amino-acid polypeptide reads, in one-letter code: Small ribosomal subunit protein uS3 (210 aa).

Residues 17 to 86 enclose the KH type-2 domain; that stretch reads IDEFLEKELR…NPQIDVQEIK (70 aa).

This sequence belongs to the universal ribosomal protein uS3 family. In terms of assembly, part of the 30S ribosomal subunit.

Binds the lower part of the 30S subunit head. The polypeptide is Small ribosomal subunit protein uS3 (Pyrococcus horikoshii (strain ATCC 700860 / DSM 12428 / JCM 9974 / NBRC 100139 / OT-3)).